Consider the following 625-residue polypeptide: Pyriculol/pyriculariol biosynthesis cluster transcription factor 1 (625 aa).

Disordered stretches follow at residues 1-83 (MATE…ATQD) and 466-496 (PMSA…LPAS). Residues 46–59 (TPSPSTPANPNSAS) show a composition bias toward low complexity. The homeobox DNA-binding region spans 73 to 132 (KNQKRQRATQDQLTTLEQEFAKNPTPTATVRDRIAEEINMTERSVQIWFQNRRAKIKLMA). The span at 467 to 496 (MSATTAPSPSEYNSPSFFSQAPENTPLPAS) shows a compositional bias: polar residues.

It is found in the nucleus. Its function is as follows. Transcriptional regulator; part of the gene cluster that mediates the biosynthesis of pyriculol and pyriculariol, two heptaketides that induce lesion formation upon application on rice leaves but are dispensable for pathogenicity. With TRF1, negatively regulates the expression of the gene cluster and the subsequent pyriculol and pyriculariol production. The polypeptide is Pyriculol/pyriculariol biosynthesis cluster transcription factor 1 (Pyricularia oryzae (strain 70-15 / ATCC MYA-4617 / FGSC 8958) (Rice blast fungus)).